The sequence spans 480 residues: Adenosylhomocysteinase (480 aa).

Residues Thr-63, Asp-142, and Glu-203 each coordinate substrate. 204–206 contributes to the NAD(+) binding site; sequence TTT. Residues Lys-233 and Asp-237 each coordinate substrate. NAD(+) contacts are provided by residues Asn-238, 267–272, Glu-290, Asn-325, 346–348, and Asn-394; these read GYGDVG and IGH.

Belongs to the adenosylhomocysteinase family. The cofactor is NAD(+).

It is found in the cytoplasm. It catalyses the reaction S-adenosyl-L-homocysteine + H2O = L-homocysteine + adenosine. It participates in amino-acid biosynthesis; L-homocysteine biosynthesis; L-homocysteine from S-adenosyl-L-homocysteine: step 1/1. Its function is as follows. May play a key role in the regulation of the intracellular concentration of adenosylhomocysteine. This chain is Adenosylhomocysteinase, found in Xanthomonas euvesicatoria pv. vesicatoria (strain 85-10) (Xanthomonas campestris pv. vesicatoria).